The primary structure comprises 212 residues: Phosphatidylserine decarboxylase proenzyme (212 aa).

Catalysis depends on Ser182, which acts as the Schiff-base intermediate with substrate; via pyruvic acid. The residue at position 182 (Ser182) is a Pyruvic acid (Ser); by autocatalysis.

This sequence belongs to the phosphatidylserine decarboxylase family. PSD-A subfamily. Heterodimer of a large membrane-associated beta subunit and a small pyruvoyl-containing alpha subunit. The cofactor is pyruvate. Is synthesized initially as an inactive proenzyme. Formation of the active enzyme involves a self-maturation process in which the active site pyruvoyl group is generated from an internal serine residue via an autocatalytic post-translational modification. Two non-identical subunits are generated from the proenzyme in this reaction, and the pyruvate is formed at the N-terminus of the alpha chain, which is derived from the carboxyl end of the proenzyme. The post-translation cleavage follows an unusual pathway, termed non-hydrolytic serinolysis, in which the side chain hydroxyl group of the serine supplies its oxygen atom to form the C-terminus of the beta chain, while the remainder of the serine residue undergoes an oxidative deamination to produce ammonia and the pyruvoyl prosthetic group on the alpha chain.

Its subcellular location is the cell membrane. The enzyme catalyses a 1,2-diacyl-sn-glycero-3-phospho-L-serine + H(+) = a 1,2-diacyl-sn-glycero-3-phosphoethanolamine + CO2. The protein operates within phospholipid metabolism; phosphatidylethanolamine biosynthesis; phosphatidylethanolamine from CDP-diacylglycerol: step 2/2. In terms of biological role, catalyzes the formation of phosphatidylethanolamine (PtdEtn) from phosphatidylserine (PtdSer). The chain is Phosphatidylserine decarboxylase proenzyme from Paraburkholderia xenovorans (strain LB400).